The primary structure comprises 139 residues: NADPH-dependent 7-cyano-7-deazaguanine reductase (139 aa).

The Thioimide intermediate role is filled by C34. D41 serves as the catalytic Proton donor. Residues 56–58 (IEL) and 75–76 (HE) contribute to the substrate site.

The protein belongs to the GTP cyclohydrolase I family. QueF type 1 subfamily.

It is found in the cytoplasm. The catalysed reaction is 7-aminomethyl-7-carbaguanine + 2 NADP(+) = 7-cyano-7-deazaguanine + 2 NADPH + 3 H(+). The protein operates within tRNA modification; tRNA-queuosine biosynthesis. In terms of biological role, catalyzes the NADPH-dependent reduction of 7-cyano-7-deazaguanine (preQ0) to 7-aminomethyl-7-deazaguanine (preQ1). The sequence is that of NADPH-dependent 7-cyano-7-deazaguanine reductase from Nitrosomonas eutropha (strain DSM 101675 / C91 / Nm57).